We begin with the raw amino-acid sequence, 268 residues long: Ribosomal RNA small subunit methyltransferase A (268 aa).

S-adenosyl-L-methionine-binding residues include N16, L18, G43, E64, D89, and N110.

Belongs to the class I-like SAM-binding methyltransferase superfamily. rRNA adenine N(6)-methyltransferase family. RsmA subfamily.

The protein resides in the cytoplasm. It catalyses the reaction adenosine(1518)/adenosine(1519) in 16S rRNA + 4 S-adenosyl-L-methionine = N(6)-dimethyladenosine(1518)/N(6)-dimethyladenosine(1519) in 16S rRNA + 4 S-adenosyl-L-homocysteine + 4 H(+). Its function is as follows. Specifically dimethylates two adjacent adenosines (A1518 and A1519) in the loop of a conserved hairpin near the 3'-end of 16S rRNA in the 30S particle. May play a critical role in biogenesis of 30S subunits. This chain is Ribosomal RNA small subunit methyltransferase A, found in Pseudomonas aeruginosa (strain ATCC 15692 / DSM 22644 / CIP 104116 / JCM 14847 / LMG 12228 / 1C / PRS 101 / PAO1).